We begin with the raw amino-acid sequence, 565 residues long: Granule-bound starch synthase 1b, chloroplastic/amyloplastic (565 aa).

Residues 1–34 constitute a chloroplast transit peptide; the sequence is VFLSMRNKTQLAKRRATNYETHRNSSRTSSPIVC. Residue Lys52 coordinates ADP-alpha-D-glucose.

The protein belongs to the glycosyltransferase 1 family. Bacterial/plant glycogen synthase subfamily.

Its subcellular location is the plastid. It is found in the chloroplast. The protein resides in the amyloplast. It carries out the reaction an NDP-alpha-D-glucose + [(1-&gt;4)-alpha-D-glucosyl](n) = [(1-&gt;4)-alpha-D-glucosyl](n+1) + a ribonucleoside 5'-diphosphate + H(+). It functions in the pathway glycan biosynthesis; starch biosynthesis. Functionally, involved in the synthesis of amylose in endosperm. In Hordeum vulgare (Barley), this protein is Granule-bound starch synthase 1b, chloroplastic/amyloplastic.